The sequence spans 344 residues: MIMNHSLLPFHTFHLPACANQIIEFTTVSQLITEWQKATRADQAVLILGQGSNVLFLDDFNGVVLVNKLKGIQHREDHDYHYIQAQGGENWHNLVEWTLAKNIAGLENLALIPGVVGSAPIQNIGAYGVEFEQFCDFVEVVNLANGQIFRLDKQACQFGYRDSVFKHQYRHSFAIISVGLKLAKAWTPTLNYGSLVKFSADTVTSQQIFDEVCAIRSSKLPDPDEYGNAGSFFKNPIIDATTFAEIQTAFPQIPYYPQPDGNIKLAAGWLIDQCELKGFQIGGAAVHTQQALVLINKAHATGRQVVELAQQVRRRVRHKFNVELHPEVRFIGQTGEVDSEEITR.

One can recognise an FAD-binding PCMH-type domain in the interval L15–A185. R161 is a catalytic residue. The Proton donor role is filled by S231. The active site involves E327.

This sequence belongs to the MurB family. Requires FAD as cofactor.

The protein resides in the cytoplasm. The catalysed reaction is UDP-N-acetyl-alpha-D-muramate + NADP(+) = UDP-N-acetyl-3-O-(1-carboxyvinyl)-alpha-D-glucosamine + NADPH + H(+). Its pathway is cell wall biogenesis; peptidoglycan biosynthesis. Cell wall formation. This is UDP-N-acetylenolpyruvoylglucosamine reductase from Haemophilus ducreyi (strain 35000HP / ATCC 700724).